The chain runs to 220 residues: 7-cyano-7-deazaguanine synthase (220 aa).

An ATP-binding site is contributed by Leu7–Leu17. 4 residues coordinate Zn(2+): Cys191, Cys199, Cys202, and Cys205.

The protein belongs to the QueC family. In terms of assembly, homodimer. Zn(2+) serves as cofactor.

The catalysed reaction is 7-carboxy-7-deazaguanine + NH4(+) + ATP = 7-cyano-7-deazaguanine + ADP + phosphate + H2O + H(+). Its pathway is purine metabolism; 7-cyano-7-deazaguanine biosynthesis. Catalyzes the ATP-dependent conversion of 7-carboxy-7-deazaguanine (CDG) to 7-cyano-7-deazaguanine (preQ(0)). The protein is 7-cyano-7-deazaguanine synthase of Desulforudis audaxviator (strain MP104C).